The chain runs to 407 residues: Phosphopentomutase (407 aa).

Residues aspartate 11, aspartate 305, histidine 310, aspartate 346, histidine 347, and histidine 358 each contribute to the Mn(2+) site.

It belongs to the phosphopentomutase family. Mn(2+) is required as a cofactor.

It localises to the cytoplasm. It catalyses the reaction 2-deoxy-alpha-D-ribose 1-phosphate = 2-deoxy-D-ribose 5-phosphate. The enzyme catalyses alpha-D-ribose 1-phosphate = D-ribose 5-phosphate. The protein operates within carbohydrate degradation; 2-deoxy-D-ribose 1-phosphate degradation; D-glyceraldehyde 3-phosphate and acetaldehyde from 2-deoxy-alpha-D-ribose 1-phosphate: step 1/2. In terms of biological role, isomerase that catalyzes the conversion of deoxy-ribose 1-phosphate (dRib-1-P) and ribose 1-phosphate (Rib-1-P) to deoxy-ribose 5-phosphate (dRib-5-P) and ribose 5-phosphate (Rib-5-P), respectively. This is Phosphopentomutase from Legionella pneumophila (strain Corby).